We begin with the raw amino-acid sequence, 339 residues long: Transcription initiation factor IIB (339 aa).

The segment at 39-70 (EELICPVCGSKNIIKDYERAEIVCEMCGCVLQ) adopts a TFIIB-type zinc-finger fold. Residues cysteine 43, cysteine 46, cysteine 62, and cysteine 65 each coordinate Zn(2+). A run of 2 repeats spans residues 156 to 239 (SELD…SREL) and 250 to 331 (DYVP…ELTE).

The protein belongs to the TFIIB family.

Stabilizes TBP binding to an archaeal box-A promoter. Also responsible for recruiting RNA polymerase II to the pre-initiation complex (DNA-TBP-TFIIB). The chain is Transcription initiation factor IIB from Methanococcus maripaludis (strain C6 / ATCC BAA-1332).